A 98-amino-acid polypeptide reads, in one-letter code: Large ribosomal subunit protein uL23c (98 aa).

This sequence belongs to the universal ribosomal protein uL23 family. As to quaternary structure, part of the 50S ribosomal subunit.

It is found in the plastid. Functionally, binds to 23S rRNA. The protein is Large ribosomal subunit protein uL23c (rpl23) of Euglena longa (Euglenophycean alga).